A 173-amino-acid chain; its full sequence is Beta-defensin 129 (173 aa).

The signal sequence occupies residues 1–19 (MKLLFPIFASLMLQYKVNT). Disulfide bonds link Cys-27-Cys-53, Cys-34-Cys-48, and Cys-38-Cys-54. Positions 144-173 (STKSNIKESRDSATASPPPAPPPPNTLPTP) are disordered. Positions 159-173 (SPPPAPPPPNTLPTP) are enriched in pro residues.

Belongs to the beta-defensin family.

It localises to the secreted. Functionally, has antibacterial activity. The polypeptide is Beta-defensin 129 (DEFB129) (Hylobates lar (Lar gibbon)).